A 526-amino-acid chain; its full sequence is Bifunctional purine biosynthesis protein PurH (526 aa).

In terms of domain architecture, MGS-like spans 1-147; it reads MPSIKRALIS…KNWKHVAIVT (147 aa).

This sequence belongs to the PurH family.

The catalysed reaction is (6R)-10-formyltetrahydrofolate + 5-amino-1-(5-phospho-beta-D-ribosyl)imidazole-4-carboxamide = 5-formamido-1-(5-phospho-D-ribosyl)imidazole-4-carboxamide + (6S)-5,6,7,8-tetrahydrofolate. It catalyses the reaction IMP + H2O = 5-formamido-1-(5-phospho-D-ribosyl)imidazole-4-carboxamide. Its pathway is purine metabolism; IMP biosynthesis via de novo pathway; 5-formamido-1-(5-phospho-D-ribosyl)imidazole-4-carboxamide from 5-amino-1-(5-phospho-D-ribosyl)imidazole-4-carboxamide (10-formyl THF route): step 1/1. The protein operates within purine metabolism; IMP biosynthesis via de novo pathway; IMP from 5-formamido-1-(5-phospho-D-ribosyl)imidazole-4-carboxamide: step 1/1. The protein is Bifunctional purine biosynthesis protein PurH of Neisseria meningitidis serogroup C / serotype 2a (strain ATCC 700532 / DSM 15464 / FAM18).